The primary structure comprises 424 residues: UPF0761 membrane protein Smal_0716 (424 aa).

A run of 6 helical transmembrane segments spans residues 48-68 (VFALVPLAIVVFGVLSAFPVF), 101-121 (SAGQLTAAGFIALVVSLLITL), 144-164 (FLVYWTVLTLGAMLAAASLAV), 181-201 (WLADLALRLAPILIEFVCITL), 216-236 (AVPGAILAAVILELVKWGIGA), and 251-271 (VAFVPILLLWIYLCWVAVLLG).

This sequence belongs to the UPF0761 family.

It localises to the cell inner membrane. This is UPF0761 membrane protein Smal_0716 from Stenotrophomonas maltophilia (strain R551-3).